The primary structure comprises 231 residues: Large ribosomal subunit protein uL1 (231 aa).

Belongs to the universal ribosomal protein uL1 family. As to quaternary structure, part of the 50S ribosomal subunit.

Functionally, binds directly to 23S rRNA. The L1 stalk is quite mobile in the ribosome, and is involved in E site tRNA release. Protein L1 is also a translational repressor protein, it controls the translation of the L11 operon by binding to its mRNA. The protein is Large ribosomal subunit protein uL1 of Paracidovorax citrulli (strain AAC00-1) (Acidovorax citrulli).